Consider the following 650-residue polypeptide: MESSGPSSCHSAARRPLHSAQAVDVASASSFRAFEILHLHLDLRAEFGPPGPGPGSRGLNGKATLELRCLLPEGASELRLDSHSCLEVMAATLLRGQPGDQQQLTEPVPFHTQPFSHYGQALCVVFPKPCCAAERFRLELTYRVGEGPGVCWLAPEQTAGKKKPFVYTQGQAVLNRAFFPCFDTPAVKCTYSALVEVPDGFTAVMSASTWERRGPNKFFFQMSQPIPSYLIALAIGDLASAEVGPRSRVWAEPCLIEAAKEEYNGVIEEFLATGEKLFGPYVWGRYDLLFMPPSFPFGGMENPCLTFVTPCLLAGDRSLADVIIHEISHSWFGNLVTNANWGEFWLNEGFTMYAQRRISTILFGAAYTCLEAATGRALLRQHMDVSGEENPLNKLRVKIEPGVDPDDTYNETPYEKGYCFVSYLAHLVGDQEQFDKFLKAYVDEFKFQSILAEDFLEFYLEYFPELKKKGVDSIPGFEFNRWLNTPGWPPYLPDLSPGDSLMKPAEELAELWAASEPDMQAIEAVAISTWKTYQLVYFLDKILQKSPLPPGNVKKLGETYPKISNAQNAELRLRWGQIILKNDHQEEFWKVKDFLQSQGKQKYTLPLYHAMMGGSEMARTLAKETFSATASQLHSNVVNYVQQILAPKGS.

S7 is subject to Phosphoserine. Position 298–302 (298–302 (GGMEN)) interacts with substrate. H325 serves as a coordination point for Zn(2+). The active-site Proton acceptor is E326. Residues H329 and E348 each contribute to the Zn(2+) site. Position 446 is an N6-acetyllysine (K446).

Belongs to the peptidase M1 family. In terms of assembly, monomer. It depends on Zn(2+) as a cofactor. Widely expressed.

Its subcellular location is the secreted. The enzyme catalyses Release of N-terminal Arg and Lys from oligopeptides when P1' is not Pro. Also acts on arylamides of Arg and Lys.. Its function is as follows. Exopeptidase which selectively removes arginine and/or lysine residues from the N-terminus of several peptide substrates including Arg(0)-Leu-enkephalin, Arg(0)-Met-enkephalin and Arg(-1)-Lys(0)-somatostatin-14. Can hydrolyze leukotriene A4 (LTA-4) into leukotriene B4 (LTB-4). The chain is Aminopeptidase B (Rnpep) from Rattus norvegicus (Rat).